The primary structure comprises 329 residues: Deoxyhypusine hydroxylase (329 aa).

HEAT-like PBS-type repeat units lie at residues 65–91 (LKHE…VLED), 99–124 (RHEA…MRDD), 232–258 (FRHE…ALSN), and 265–292 (VRHE…FLND). Histidine 67, glutamate 68, histidine 100, glutamate 101, histidine 234, glutamate 235, histidine 267, and glutamate 268 together coordinate Fe cation.

It belongs to the deoxyhypusine hydroxylase family. It depends on Fe(2+) as a cofactor.

Its subcellular location is the cytoplasm. It localises to the nucleus. The enzyme catalyses [eIF5A protein]-deoxyhypusine + AH2 + O2 = [eIF5A protein]-hypusine + A + H2O. It participates in protein modification; eIF5A hypusination. Its function is as follows. Catalyzes the hydroxylation of the N(6)-(4-aminobutyl)-L-lysine intermediate to form hypusine, an essential post-translational modification only found in mature eIF-5A factor. This Phaeosphaeria nodorum (strain SN15 / ATCC MYA-4574 / FGSC 10173) (Glume blotch fungus) protein is Deoxyhypusine hydroxylase.